The sequence spans 597 residues: Glutamine--fructose-6-phosphate aminotransferase [isomerizing] (597 aa).

C2 (nucleophile; for GATase activity) is an active-site residue. The Glutamine amidotransferase type-2 domain occupies 2–218 (CGIVGYIGDS…ENSVGQISLE (217 aa)). 2 SIS domains span residues 276–416 (IDPE…QLGT) and 449–587 (LSKR…VDHP). Residue K592 is the For Fru-6P isomerization activity of the active site.

Homodimer.

It localises to the cytoplasm. The enzyme catalyses D-fructose 6-phosphate + L-glutamine = D-glucosamine 6-phosphate + L-glutamate. Its function is as follows. Catalyzes the first step in hexosamine metabolism, converting fructose-6P into glucosamine-6P using glutamine as a nitrogen source. The sequence is that of Glutamine--fructose-6-phosphate aminotransferase [isomerizing] from Helicobacter pylori (strain J99 / ATCC 700824) (Campylobacter pylori J99).